We begin with the raw amino-acid sequence, 467 residues long: Ribosome biogenesis protein YTM1 (467 aa).

The ubiquitin-like (UBL) domain stretch occupies residues I8–R95. The tract at residues S105–K467 is sufficient for interaction with ERB1 and association with 66S pre-ribosomes. WD repeat units lie at residues K120 to Y159, G161 to P199, G216 to I255, S293 to T333, S335 to E374, G382 to T422, and K432 to K467.

This sequence belongs to the WD repeat WDR12/YTM1 family. As to quaternary structure, component of the NOP7 complex, composed of ERB1, NOP7 and YTM1. The complex is held together by ERB1, which interacts with NOP7 via its N-terminal domain and with YTM1 via a high-affinity interaction between the seven-bladed beta-propeller domains of the 2 proteins. The NOP7 complex associates with the 66S pre-ribosome. Interacts (via UBL domain) with MDN1 (via VWFA/MIDAS domain).

It is found in the nucleus. The protein localises to the nucleolus. The protein resides in the nucleoplasm. In terms of biological role, component of the NOP7 complex, which is required for maturation of the 25S and 5.8S ribosomal RNAs and formation of the 60S ribosome. In Scheffersomyces stipitis (strain ATCC 58785 / CBS 6054 / NBRC 10063 / NRRL Y-11545) (Yeast), this protein is Ribosome biogenesis protein YTM1.